The primary structure comprises 363 residues: MGIKGLKPLLRSYGVHEYTVPLSQMSGKTIAVDGTFLLHKYKNCHSVPWHYLTLYTLSNLRLRNVKVLFIFDGMSPPEKSREKSNRRCRKQALMEKGTLVKAQLEVWKKDGGEQAPELAAVSERLVKTRGLDPSLTDPETVQVLTDYVDNMSRDTRVTSDDYELMRRSLDAFGFPYADAPDEAELCCVRVVQMGIADAPMTIDSDALACGALHGVDVVYTDLHGETLTAMSTSKSKEALGLNGEQFMDLCVMCGTDFNQRVHKLGPVTALKLIKAHGSIENIPSAAPSMSCLEAVRTREILSGGDMESRRKDYEAMVQKPVSAELIRSVFPPEFLDKLLHENWQLRDAMKRMAPEAFEKCKRK.

It belongs to the XPG/RAD2 endonuclease family. The cofactor is Mg(2+).

Its subcellular location is the host nucleus. Its function is as follows. Probable endonuclease. This chain is Putative RAD2-like endonuclease 095R, found in Frog virus 3 (isolate Goorha) (FV-3).